Consider the following 62-residue polypeptide: Large ribosomal subunit protein uL30 (62 aa).

It belongs to the universal ribosomal protein uL30 family. As to quaternary structure, part of the 50S ribosomal subunit.

The protein is Large ribosomal subunit protein uL30 of Polynucleobacter asymbioticus (strain DSM 18221 / CIP 109841 / QLW-P1DMWA-1) (Polynucleobacter necessarius subsp. asymbioticus).